We begin with the raw amino-acid sequence, 493 residues long: Ecdysteroid UDP-glucosyltransferase (493 aa).

The first 17 residues, 1-17 (MIFILLTTLLAVGGAQT), serve as a signal peptide directing secretion.

The protein belongs to the UDP-glycosyltransferase family.

In terms of biological role, catalyzes the transfer of glucose from UDP-glucose to ecdysteroids which are insect molting hormones. Expression of egt interferes with normal insect development and block molting. The polypeptide is Ecdysteroid UDP-glucosyltransferase (egt) (Choristoneura fumiferana defective polyhedrosis virus (Cfdef)).